The primary structure comprises 289 residues: Agamous-like MADS-box protein AGL93 (289 aa).

The region spanning 18–78 (QTCFKKSSLS…GKLIKTWPDD (61 aa)) is the MADS-box domain. The tract at residues 151-197 (EFGQTRAVSSTTNPLSPPPSLIEDHRHQQRTEPLMSGVSNTEQDLST) is disordered. Over residues 187-197 (GVSNTEQDLST) the composition is skewed to polar residues.

As to expression, expressed in pollen.

It is found in the nucleus. Functionally, probable transcription factor. This chain is Agamous-like MADS-box protein AGL93, found in Arabidopsis thaliana (Mouse-ear cress).